The chain runs to 131 residues: Small ribosomal subunit protein uS11 (131 aa).

It belongs to the universal ribosomal protein uS11 family. In terms of assembly, part of the 30S ribosomal subunit. Interacts with proteins S7 and S18. Binds to IF-3.

In terms of biological role, located on the platform of the 30S subunit, it bridges several disparate RNA helices of the 16S rRNA. Forms part of the Shine-Dalgarno cleft in the 70S ribosome. This is Small ribosomal subunit protein uS11 from Trichormus variabilis (strain ATCC 29413 / PCC 7937) (Anabaena variabilis).